Consider the following 271-residue polypeptide: Phosphatidylglycerol--prolipoprotein diacylglyceryl transferase (271 aa).

Helical transmembrane passes span 21–41 (ISVRWYGLMYLFGFLFAMWLA), 60–80 (LLFAGFLGVVLGGRIGYVLFY), 95–115 (VWTGGMSFHGGLLGVITAMLW), 124–144 (FFGVADFVAPLVPFGLGVGRL), 176–196 (SQLYEMALEGVLLFFILNWFI), 203–223 (GSVSGLFLAGYGTFRFLVEYV), and 230–250 (LGLFGGFISMGQILSSPMIIG). Arg-143 lines the a 1,2-diacyl-sn-glycero-3-phospho-(1'-sn-glycerol) pocket.

It belongs to the Lgt family.

It localises to the cell inner membrane. The enzyme catalyses L-cysteinyl-[prolipoprotein] + a 1,2-diacyl-sn-glycero-3-phospho-(1'-sn-glycerol) = an S-1,2-diacyl-sn-glyceryl-L-cysteinyl-[prolipoprotein] + sn-glycerol 1-phosphate + H(+). The protein operates within protein modification; lipoprotein biosynthesis (diacylglyceryl transfer). Its function is as follows. Catalyzes the transfer of the diacylglyceryl group from phosphatidylglycerol to the sulfhydryl group of the N-terminal cysteine of a prolipoprotein, the first step in the formation of mature lipoproteins. The protein is Phosphatidylglycerol--prolipoprotein diacylglyceryl transferase of Vibrio vulnificus (strain YJ016).